The chain runs to 24 residues: L-amino-acid oxidase (24 aa).

Belongs to the flavin monoamine oxidase family. FIG1 subfamily. As to quaternary structure, homodimer; non-covalently linked. The cofactor is FAD. In terms of processing, N-glycosylated. Expressed by the venom gland.

The protein localises to the secreted. It catalyses the reaction an L-alpha-amino acid + O2 + H2O = a 2-oxocarboxylate + H2O2 + NH4(+). In terms of biological role, catalyzes an oxidative deamination of predominantly hydrophobic and aromatic L-amino acids, thus producing hydrogen peroxide that may contribute to the diverse toxic effects of this enzyme. Exhibits diverse biological activities, such as hemorrhage, hemolysis, edema, apoptosis, and antiparasitic activities. This protein has antibacterial activity (against E.coli, S.aureus, and B.dysenteriae), cytotoxic activity, as well as an ability to induce platelet aggregation. Effects of snake L-amino oxidases on platelets are controversial, since they either induce aggregation or inhibit agonist-induced aggregation. These different effects are probably due to different experimental conditions. This chain is L-amino-acid oxidase, found in Protobothrops mucrosquamatus (Taiwan habu).